Reading from the N-terminus, the 59-residue chain is UPF0434 protein Shew185_1670 (59 aa).

The protein belongs to the UPF0434 family.

This chain is UPF0434 protein Shew185_1670, found in Shewanella baltica (strain OS185).